The sequence spans 261 residues: Claudin-18 (261 aa).

Residues 1 to 6 (MATTTC) lie on the Cytoplasmic side of the membrane. A helical transmembrane segment spans residues 7–27 (QVVGLLLSLLGLAGCIAATGM). Over 28 to 80 (DMWSTQDLYDNPVTSVFQYEGLWRSCVQQSSGFTECRPYFTILGLPAMLQAVR) the chain is Extracellular. A helical transmembrane segment spans residues 81–101 (ALMIVGIVLGVIGILVSIFAL). Over 102-122 (KCIRIGSMDDSAKAKMTLTSG) the chain is Cytoplasmic. The chain crosses the membrane as a helical span at residues 123–143 (IMFIISGVCAIIGVSVFANML). Over 144–173 (VTNFWMSTANMYSGMGGMVQTVQTRYTFGA) the chain is Extracellular. The chain crosses the membrane as a helical span at residues 174-194 (ALFVGWIAGGLTLIGGVMMCI). Topologically, residues 195–261 (ACRGLTPDDR…QSHPTKYDYV (67 aa)) are cytoplasmic. Positions 195 to 261 (ACRGLTPDDR…QSHPTKYDYV (67 aa)) are required for role in regulation of RANKL-induced osteoclast differentiation. S214 is modified (phosphoserine). The disordered stretch occupies residues 242–261 (DGGARTEDDEQSHPTKYDYV).

It belongs to the claudin family. In terms of assembly, interacts with TJP2/ZO-2. Interacts with TJP1/ZO-1. Interacts with YAP1 (phosphorylated); the interaction sequesters YAP1 away from the nucleus and thereby restricts transcription of YAP1 target genes. Interacts with CLDN19. In terms of tissue distribution, expressed in the lung (at protein level).

It localises to the cell junction. It is found in the tight junction. The protein localises to the cell membrane. Involved in alveolar fluid homeostasis via regulation of alveolar epithelial tight junction composition and therefore ion transport and solute permeability, potentially via downstream regulation of the actin cytoskeleton organization and beta-2-adrenergic signaling. Required for lung alveolarization and maintenance of the paracellular alveolar epithelial barrier. Acts to maintain epithelial progenitor cell proliferation and organ size, via regulation of YAP1 localization away from the nucleus and thereby restriction of YAP1 target gene transcription. Acts as a negative regulator of RANKL-induced osteoclast differentiation, potentially via relocation of TJP2/ZO-2 away from the nucleus, subsequently involved in bone resorption in response to calcium deficiency. Mediates the osteoprotective effects of estrogen, potentially via acting downstream of estrogen signaling independently of RANKL signaling pathways. Its function is as follows. Required for the formation of the gastric paracellular barrier via its role in tight junction formation, thereby involved in the response to gastric acidification. The protein is Claudin-18 of Rattus norvegicus (Rat).